The following is a 200-amino-acid chain: ATP-dependent Clp protease proteolytic subunit (200 aa).

The Nucleophile role is filled by Ser-103. His-128 is an active-site residue.

It belongs to the peptidase S14 family. As to quaternary structure, fourteen ClpP subunits assemble into 2 heptameric rings which stack back to back to give a disk-like structure with a central cavity, resembling the structure of eukaryotic proteasomes.

Its subcellular location is the cytoplasm. It carries out the reaction Hydrolysis of proteins to small peptides in the presence of ATP and magnesium. alpha-casein is the usual test substrate. In the absence of ATP, only oligopeptides shorter than five residues are hydrolyzed (such as succinyl-Leu-Tyr-|-NHMec, and Leu-Tyr-Leu-|-Tyr-Trp, in which cleavage of the -Tyr-|-Leu- and -Tyr-|-Trp bonds also occurs).. Cleaves peptides in various proteins in a process that requires ATP hydrolysis. Has a chymotrypsin-like activity. Plays a major role in the degradation of misfolded proteins. The chain is ATP-dependent Clp protease proteolytic subunit from Vibrio parahaemolyticus serotype O3:K6 (strain RIMD 2210633).